We begin with the raw amino-acid sequence, 358 residues long: NADH-quinone oxidoreductase subunit H (358 aa).

8 helical membrane-spanning segments follow: residues 29 to 49 (LIKIICVVLPLLGAVAYLTLW), 95 to 115 (GLFYLGPVMAIMPALGAWAVI), 130 to 150 (LLLVMAITSIEVYGVIIAGWA), 176 to 196 (FCFLVVIMVSGSMNLTEIVAV), 206 to 226 (GLGFLSWNWLPLFPIFIVYLI), 258 to 280 (GFAIFFLAEYASMWLVSILAVVM), 297 to 317 (GWIWLGIKTFLVVSMFIWIRA), and 334 to 354 (IFIPVTLVWLLVVGAWLLSPW).

This sequence belongs to the complex I subunit 1 family. In terms of assembly, NDH-1 is composed of 14 different subunits. Subunits NuoA, H, J, K, L, M, N constitute the membrane sector of the complex.

Its subcellular location is the cell inner membrane. The catalysed reaction is a quinone + NADH + 5 H(+)(in) = a quinol + NAD(+) + 4 H(+)(out). Functionally, NDH-1 shuttles electrons from NADH, via FMN and iron-sulfur (Fe-S) centers, to quinones in the respiratory chain. The immediate electron acceptor for the enzyme in this species is believed to be ubiquinone. Couples the redox reaction to proton translocation (for every two electrons transferred, four hydrogen ions are translocated across the cytoplasmic membrane), and thus conserves the redox energy in a proton gradient. This subunit may bind ubiquinone. The chain is NADH-quinone oxidoreductase subunit H from Acidovorax sp. (strain JS42).